Here is a 962-residue protein sequence, read N- to C-terminus: Glycine dehydrogenase (decarboxylating) (962 aa).

K709 is modified (N6-(pyridoxal phosphate)lysine).

It belongs to the GcvP family. As to quaternary structure, the glycine cleavage system is composed of four proteins: P, T, L and H. It depends on pyridoxal 5'-phosphate as a cofactor.

The enzyme catalyses N(6)-[(R)-lipoyl]-L-lysyl-[glycine-cleavage complex H protein] + glycine + H(+) = N(6)-[(R)-S(8)-aminomethyldihydrolipoyl]-L-lysyl-[glycine-cleavage complex H protein] + CO2. In terms of biological role, the glycine cleavage system catalyzes the degradation of glycine. The P protein binds the alpha-amino group of glycine through its pyridoxal phosphate cofactor; CO(2) is released and the remaining methylamine moiety is then transferred to the lipoamide cofactor of the H protein. The sequence is that of Glycine dehydrogenase (decarboxylating) from Shewanella pealeana (strain ATCC 700345 / ANG-SQ1).